The sequence spans 339 residues: Bifunctional NMN adenylyltransferase/Nudix hydrolase (339 aa).

Residues 1-183 (MQTKYQYGIY…RYIALCDEYQ (183 aa)) form an NMN adenylyltransferase region. The Nudix hydrolase domain occupies 199-335 (PTFITTDAVV…EDHFQIIQHF (137 aa)). The short motif at 233–254 (GFIKQNETLVEGMLRELKEETR) is the Nudix box element.

It in the N-terminal section; belongs to the archaeal NMN adenylyltransferase family. It depends on Mg(2+) as a cofactor. Mn(2+) serves as cofactor.

Its subcellular location is the cytoplasm. It catalyses the reaction beta-nicotinamide D-ribonucleotide + ATP + H(+) = diphosphate + NAD(+). It functions in the pathway cofactor biosynthesis; NAD(+) biosynthesis; NAD(+) from nicotinamide D-ribonucleotide: step 1/1. Functionally, the Nudix hydrolase domain is active on ADP-ribose, (2')-phospho-ADP-ribose, IDP-ribose and NADPH. The polypeptide is Bifunctional NMN adenylyltransferase/Nudix hydrolase (Synechocystis sp. (strain ATCC 27184 / PCC 6803 / Kazusa)).